A 438-amino-acid polypeptide reads, in one-letter code: Glutamate-1-semialdehyde 2,1-aminomutase (438 aa).

Lys272 is subject to N6-(pyridoxal phosphate)lysine.

It belongs to the class-III pyridoxal-phosphate-dependent aminotransferase family. HemL subfamily. In terms of assembly, homodimer. Pyridoxal 5'-phosphate is required as a cofactor.

It localises to the cytoplasm. It catalyses the reaction (S)-4-amino-5-oxopentanoate = 5-aminolevulinate. It participates in porphyrin-containing compound metabolism; protoporphyrin-IX biosynthesis; 5-aminolevulinate from L-glutamyl-tRNA(Glu): step 2/2. The protein operates within porphyrin-containing compound metabolism; chlorophyll biosynthesis. The sequence is that of Glutamate-1-semialdehyde 2,1-aminomutase from Chloroflexus aggregans (strain MD-66 / DSM 9485).